The following is a 352-amino-acid chain: MFATPLRQPAAANHQTPKNSAGMDEHGKPYQYEITDHGYGKDAVKVLHVSRNGPVHAIQEFEVGTHLKLYSKKDYYQGNNSDIVATDSQKNTVYLLAKKHGIESPEKFALLLARHFINKYSHVEEAHVHVEAYPWQRVCQEETRTNVNGKCENGVQGNCDFSSIDNRSLHNHAFIFTPTALHYCDVVIRRTDPKQTVITGIKGLRVLKTTQSSFVNFVNDEFRSLPDQYDRIFSTVVDCSWEYSDTENLDFLRAWQTVKNIIIRNFAGDPQVGVSSPSVQHTLYLSERQVLDVLPQVSVISMTMPNKHYFNFDTKPFQKIAPGDNNEVFIPVDKPHGTIYAQLARKNINSHL.

The disordered stretch occupies residues Met1–Tyr32. Basic and acidic residues predominate over residues Met23 to Tyr32. Residues Lys41 and Thr86 each act as charge relay system in the active site. Urate contacts are provided by Thr86, Asp87, Phe214, Arg231, Val279, Gln280, and Asn306. Catalysis depends on His308, which acts as the Charge relay system. The Microbody targeting signal signature appears at Ser350–Leu352.

Belongs to the uricase family. As to expression, malpighian tubules.

The protein localises to the peroxisome. It carries out the reaction urate + O2 + H2O = 5-hydroxyisourate + H2O2. Its pathway is purine metabolism; urate degradation; (S)-allantoin from urate: step 1/3. With respect to regulation, repressed by 20-hydroxyecdysone. In terms of biological role, catalyzes the oxidation of uric acid to 5-hydroxyisourate, which is further processed to form (S)-allantoin. This is Uricase (Uro) from Drosophila melanogaster (Fruit fly).